Consider the following 488-residue polypeptide: GTPase Der (488 aa).

EngA-type G domains follow at residues 3 to 166 and 199 to 372; these read PVVA…AEAM and IKLA…DSAT. GTP-binding positions include 9-16, 56-60, 118-121, 205-212, 252-256, and 317-320; these read GRPNVGKS, DTGGI, NKID, GKPNVGKS, DTAGV, and NKWD. The KH-like domain maps to 373-457; the sequence is RRVSTSMLTR…PIQLRFQEGD (85 aa).

This sequence belongs to the TRAFAC class TrmE-Era-EngA-EngB-Septin-like GTPase superfamily. EngA (Der) GTPase family. Associates with the 50S ribosomal subunit.

Functionally, GTPase that plays an essential role in the late steps of ribosome biogenesis. The polypeptide is GTPase Der (Shewanella sp. (strain ANA-3)).